A 224-amino-acid chain; its full sequence is UPF0173 metal-dependent hydrolase EAT1b_0495 (224 aa).

The protein belongs to the UPF0173 family.

The protein is UPF0173 metal-dependent hydrolase EAT1b_0495 of Exiguobacterium sp. (strain ATCC BAA-1283 / AT1b).